The primary structure comprises 100 residues: Urease subunit gamma (100 aa).

This sequence belongs to the urease gamma subunit family. Heterotrimer of UreA (gamma), UreB (beta) and UreC (alpha) subunits. Three heterotrimers associate to form the active enzyme.

The protein resides in the cytoplasm. It carries out the reaction urea + 2 H2O + H(+) = hydrogencarbonate + 2 NH4(+). Its pathway is nitrogen metabolism; urea degradation; CO(2) and NH(3) from urea (urease route): step 1/1. This chain is Urease subunit gamma, found in Saccharophagus degradans (strain 2-40 / ATCC 43961 / DSM 17024).